A 671-amino-acid chain; its full sequence is Synaptotagmin-like protein 4 (671 aa).

The region spanning 4–122 (LLDLSFLSEE…KATGDWFYDQ (119 aa)) is the RabBD domain. Residues 63-105 (CARCQESLGRLSPKTNTCRGCNHLVCRDCRIQESNGTWRCKVC) form an FYVE-type zinc finger. Residues 199–243 (SESLDSFTADSDSTSRRDSLDKSGLFPEWKKMSAPKSQVEKETQP) are disordered. Ser201, Ser204, Ser217, Ser221, Ser274, and Ser289 each carry phosphoserine. Residues 356–478 (VTGRIAFSLK…KLDKKLDHCL (123 aa)) enclose the C2 1 domain. Ser488 carries the phosphoserine modification. Residues 507–633 (PASKTPVGGD…ISNGEVVDWM (127 aa)) enclose the C2 2 domain.

Part of a ternary complex containing STX1A and RAB27A. Can bind both dominant negative and dominant active mutants of RAB27A. Binds STXBP1, RAB3A, RAB8A and RAB27B. Interacts with MYO5A.

The protein localises to the membrane. The protein resides in the cell membrane. It localises to the cytoplasmic vesicle. Its subcellular location is the secretory vesicle membrane. Its function is as follows. Modulates exocytosis of dense-core granules and secretion of hormones in the pancreas and the pituitary. Interacts with vesicles containing negatively charged phospholipids in a Ca(2+)-independent manner. The polypeptide is Synaptotagmin-like protein 4 (SYTL4) (Homo sapiens (Human)).